We begin with the raw amino-acid sequence, 102 residues long: Lipopolysaccharide assembly protein A (102 aa).

Residues 1–2 (MK) lie on the Cytoplasmic side of the membrane. Residues 3–23 (YLLIFLLVLAIFVISVTLGAQ) form a helical membrane-spanning segment. The Periplasmic portion of the chain corresponds to 24-43 (NDQQVTFNYLLAQGEYRIST). Residues 44-64 (LLAVLFAAGFAIGWLICGLFW) traverse the membrane as a helical segment. A coiled-coil region spans residues 64–92 (WLRVRVSLARAERKIKRLENQLSPATDVA). Over 65–102 (LRVRVSLARAERKIKRLENQLSPATDVAVVPHSSAAKE) the chain is Cytoplasmic.

Belongs to the LapA family.

The protein localises to the cell inner membrane. Its function is as follows. Involved in the assembly of lipopolysaccharide (LPS). The sequence is that of Lipopolysaccharide assembly protein A from Escherichia coli (strain K12).